A 402-amino-acid chain; its full sequence is Multidrug resistance protein MdtH (402 aa).

At methionine 1 to lysine 12 the chain is on the cytoplasmic side. Residues tyrosine 13–isoleucine 33 traverse the membrane as a helical segment. Topologically, residues serine 34 to glutamate 98 are periplasmic. The chain crosses the membrane as a helical span at residues proline 99–phenylalanine 116. Topologically, residues aspartate 117 to serine 138 are cytoplasmic. Residues leucine 139–leucine 159 form a helical membrane-spanning segment. Residues glutamine 160–arginine 164 lie on the Periplasmic side of the membrane. The chain crosses the membrane as a helical span at residues leucine 165–leucine 185. Topologically, residues proline 186–tyrosine 213 are cytoplasmic. The chain crosses the membrane as a helical span at residues valine 214–methionine 234. Topologically, residues valine 235–serine 243 are periplasmic. The helical transmembrane segment at alanine 244–alanine 264 threads the bilayer. The Cytoplasmic segment spans residues arginine 265–arginine 276. The chain crosses the membrane as a helical span at residues leucine 277–leucine 297. Residues glutamine 298–glutamine 299 lie on the Periplasmic side of the membrane. The chain crosses the membrane as a helical span at residues leucine 300 to threonine 320. Residues leucine 321–arginine 339 are Cytoplasmic-facing. Residues leucine 340–glycine 360 form a helical membrane-spanning segment. Residues lysine 361–glutamate 367 lie on the Periplasmic side of the membrane. A helical transmembrane segment spans residues leucine 368–phenylalanine 388. Residues serine 389–alanine 402 lie on the Cytoplasmic side of the membrane.

The protein belongs to the major facilitator superfamily. DHA1 family. MdtH (TC 2.A.1.2.21) subfamily.

It localises to the cell inner membrane. The sequence is that of Multidrug resistance protein MdtH from Shigella flexneri.